Here is a 502-residue protein sequence, read N- to C-terminus: NAD(P)H-quinone oxidoreductase chain 4, chloroplastic (502 aa).

14 helical membrane-spanning segments follow: residues 4–24, 37–57, 86–106, 113–131, 136–156, 169–189, 210–230, 244–264, 274–294, 307–327, 332–352, 388–408, 418–438, and 464–484; these read FPWL…IFFV, YTIC…CYHF, GLSI…TLAA, SRLF…VGSF, LLLF…LLSM, FILY…GMGL, GLEI…SPII, HYST…YGLV, AHSI…IYAA, IAYS…SITD, GAIL…FLAG, LALP…GIIT, IVIS…SLSM, and LFVS…PDFV.

This sequence belongs to the complex I subunit 4 family.

The protein resides in the plastid. Its subcellular location is the chloroplast thylakoid membrane. The enzyme catalyses a plastoquinone + NADH + (n+1) H(+)(in) = a plastoquinol + NAD(+) + n H(+)(out). It carries out the reaction a plastoquinone + NADPH + (n+1) H(+)(in) = a plastoquinol + NADP(+) + n H(+)(out). The protein is NAD(P)H-quinone oxidoreductase chain 4, chloroplastic of Calycanthus floridus var. glaucus (Eastern sweetshrub).